An 88-amino-acid polypeptide reads, in one-letter code: Metastasis-suppressor KiSS-1 (88 aa).

Residues 1 to 13 (SVENSRPTGQQLE) show a composition bias toward polar residues. A disordered region spans residues 1 to 88 (SVENSRPTGQ…REKDLPNYNW (88 aa)). Residues 33 to 55 (SATARLSRRGASLSSPAESSGSP) are compositionally biased toward low complexity. Residues 78 to 88 (QREKDLPNYNW) show a composition bias toward basic and acidic residues. Y86 is subject to Phosphotyrosine.

Belongs to the KISS1 family. As to expression, in the hypothalamus, expression increases with puberty in both male and female monkeys. Robust expression in the region of the arcuate nucleus (ARC).

It is found in the secreted. Metastasis suppressor protein. May regulate events downstream of cell-matrix adhesion, perhaps involving cytoskeletal reorganization. Generates a C-terminally amidated peptide, metastin which functions as the endogenous ligand of the G-protein coupled receptor GPR54. The receptor is essential for normal gonadotropin-released hormone physiology and for puberty. The hypothalamic KiSS1/GPR54 system is a pivotal factor in central regulation of the gonadotropic axis at puberty and in adulthood. The sequence is that of Metastasis-suppressor KiSS-1 (KISS1) from Macaca mulatta (Rhesus macaque).